The chain runs to 438 residues: 2-(3-amino-3-carboxypropyl)histidine synthase subunit 1 (438 aa).

The tract at residues 7 to 29 (SGAAEQGGRDGPGRGRAPRGRVA) is disordered. Residues cysteine 110, cysteine 214, and cysteine 342 each coordinate [4Fe-4S] cluster. The interval 391 to 421 (VNHGQDRRPHAPGRPARGKVQEGSARPPSAV) is disordered.

Belongs to the DPH1/DPH2 family. DPH1 subfamily. In terms of assembly, component of the 2-(3-amino-3-carboxypropyl)histidine synthase complex composed of DPH1, DPH2, DPH3 and a NADH-dependent reductase. Interacts with DPH2. Interacts with RBM8A. It depends on [4Fe-4S] cluster as a cofactor. In terms of tissue distribution, expressed in heart, brain, placenta, lung, liver, skeletal muscle, kidney, pancreas, spleen, thymus, mammary gland, colon, small intestine, testis and ovary. Reduced expression in primary breast and ovarian tumors.

It localises to the nucleus. It is found in the cytoplasm. It catalyses the reaction L-histidyl-[translation elongation factor 2] + S-adenosyl-L-methionine = 2-[(3S)-amino-3-carboxypropyl]-L-histidyl-[translation elongation factor 2] + S-methyl-5'-thioadenosine + H(+). Its pathway is protein modification; peptidyl-diphthamide biosynthesis. In terms of biological role, catalyzes the first step of diphthamide biosynthesis, a post-translational modification of histidine which occurs in elongation factor 2. DPH1 and DPH2 transfer a 3-amino-3-carboxypropyl (ACP) group from S-adenosyl-L-methionine (SAM) to a histidine residue, the reaction is assisted by a reduction system comprising DPH3 and a NADH-dependent reductase. Acts as a tumor suppressor. This chain is 2-(3-amino-3-carboxypropyl)histidine synthase subunit 1, found in Homo sapiens (Human).